A 373-amino-acid polypeptide reads, in one-letter code: NK1 transcription factor-related protein 1 (373 aa).

3 disordered regions span residues 49-74 (ALPA…TVHR), 149-231 (SDFT…RRAR), and 281-328 (KWKK…SMHT). Over residues 53 to 63 (ESRETSPRHEP) the composition is skewed to basic and acidic residues. Residues 168-177 (EESSALTGNN) show a composition bias toward polar residues. The span at 196 to 210 (GQQTQQSSSNGQNHQ) shows a compositional bias: low complexity. A DNA-binding region (homeobox) is located at residues 227–286 (PRRARTAFTYEQLVALENKFKSTRYLSVCERLNLALSLSLTETQVKIWFQNRRTKWKKQN). A compositionally biased stretch (gly residues) spans 296–310 (SGGGGGNGPSNGLGG).

Belongs to the NK-1 homeobox family.

The protein resides in the nucleus. Its function is as follows. May participate in the energy homeostasis regulation. The polypeptide is NK1 transcription factor-related protein 1 (Danio rerio (Zebrafish)).